The sequence spans 302 residues: tRNA pseudouridine synthase B (302 aa).

Asp-42 functions as the Nucleophile in the catalytic mechanism.

This sequence belongs to the pseudouridine synthase TruB family. Type 1 subfamily.

It carries out the reaction uridine(55) in tRNA = pseudouridine(55) in tRNA. Functionally, responsible for synthesis of pseudouridine from uracil-55 in the psi GC loop of transfer RNAs. The protein is tRNA pseudouridine synthase B of Leifsonia xyli subsp. xyli (strain CTCB07).